Reading from the N-terminus, the 354-residue chain is MNAFKPLVFSGVQPTGNLHLGNYLGAIRKFVALQEDNDCIYCVVDMHAITAQLVHSDLKAQTRSIAAAFIAAGIDPVKHIVFNQSAVPQHAELAWVFNCVARIGWMERMTQFKDKSGKNAEQVSLGLLAYPSLMAADILVYRATHVPVGDDQKQHLELARDIAQKFNIDFGGHIRNAGLGVNITVGDEPVHAYFPMVEPLIGGPAPRVMSLKDGTKKMSKSDPSDLSRINLMDDVDAISKKIKKAKTDPDALPSEVEGLKGRPEAENLVGIYAALSDKTKADVLAEFGGQQFSTFKPALVELAVNVLAPVNNEMRRLLDDPTHIDAILSQGGERARTIAEKTMNEVRDIIGFLR.

Residues 13–15 and 21–22 each bind ATP; these read QPT and GN. Positions 14–22 match the 'HIGH' region motif; sequence PTGNLHLGN. L-tryptophan is bound at residue aspartate 137. Residues 149 to 151, valine 208, and 217 to 221 each bind ATP; these read GDD and KMSKS. The 'KMSKS' region motif lies at 217-221; the sequence is KMSKS.

Belongs to the class-I aminoacyl-tRNA synthetase family. Homodimer.

The protein localises to the cytoplasm. The enzyme catalyses tRNA(Trp) + L-tryptophan + ATP = L-tryptophyl-tRNA(Trp) + AMP + diphosphate + H(+). Its function is as follows. Catalyzes the attachment of tryptophan to tRNA(Trp). This is Tryptophan--tRNA ligase from Agrobacterium fabrum (strain C58 / ATCC 33970) (Agrobacterium tumefaciens (strain C58)).